The sequence spans 1052 residues: Protein HelA (1052 aa).

A run of 13 helical transmembrane segments spans residues 14–34, 121–141, 348–368, 369–389, 393–413, 450–470, 483–503, 537–557, 878–898, 903–923, 934–954, 979–999, and 1011–1031; these read WFVL…FQRL, LPPG…EIFM, GALL…AALI, TAMV…ENQI, LMSL…IIVE, SIFG…LTGV, IIAL…AVAI, VVIS…FHLG, LQIV…ISFG, ALLV…ALWL, VGFI…ITFI, PVLM…LATG, and VVIG…PGLY.

The protein belongs to the resistance-nodulation-cell division (RND) (TC 2.A.6) family.

It localises to the cell inner membrane. Its function is as follows. Presumed to function with HelC and HelB in efflux of an unidentified substrate. The sequence is that of Protein HelA (helA) from Legionella pneumophila.